Reading from the N-terminus, the 393-residue chain is NAD(P)H-quinone oxidoreductase subunit H, chloroplastic (393 aa).

It belongs to the complex I 49 kDa subunit family. In terms of assembly, NDH is composed of at least 16 different subunits, 5 of which are encoded in the nucleus.

The protein resides in the plastid. It is found in the chloroplast thylakoid membrane. It carries out the reaction a plastoquinone + NADH + (n+1) H(+)(in) = a plastoquinol + NAD(+) + n H(+)(out). It catalyses the reaction a plastoquinone + NADPH + (n+1) H(+)(in) = a plastoquinol + NADP(+) + n H(+)(out). Its function is as follows. NDH shuttles electrons from NAD(P)H:plastoquinone, via FMN and iron-sulfur (Fe-S) centers, to quinones in the photosynthetic chain and possibly in a chloroplast respiratory chain. The immediate electron acceptor for the enzyme in this species is believed to be plastoquinone. Couples the redox reaction to proton translocation, and thus conserves the redox energy in a proton gradient. This is NAD(P)H-quinone oxidoreductase subunit H, chloroplastic from Drimys granadensis.